We begin with the raw amino-acid sequence, 432 residues long: Ribosomal protein uS12 methylthiotransferase RimO (432 aa).

The 119-residue stretch at 4–122 (NKVDIITLGC…LISDLGKSYH (119 aa)) folds into the MTTase N-terminal domain. Residues Cys-13, Cys-51, Cys-85, Cys-146, Cys-150, and Cys-153 each coordinate [4Fe-4S] cluster. Positions 132–363 (TTPRHYAYVK…MRVQEGISAD (232 aa)) constitute a Radical SAM core domain. The 67-residue stretch at 366–432 (ASKVGQTFRV…AFDLYGKVLN (67 aa)) folds into the TRAM domain.

It belongs to the methylthiotransferase family. RimO subfamily. [4Fe-4S] cluster serves as cofactor.

The protein localises to the cytoplasm. It carries out the reaction L-aspartate(89)-[ribosomal protein uS12]-hydrogen + (sulfur carrier)-SH + AH2 + 2 S-adenosyl-L-methionine = 3-methylsulfanyl-L-aspartate(89)-[ribosomal protein uS12]-hydrogen + (sulfur carrier)-H + 5'-deoxyadenosine + L-methionine + A + S-adenosyl-L-homocysteine + 2 H(+). In terms of biological role, catalyzes the methylthiolation of an aspartic acid residue of ribosomal protein uS12. The chain is Ribosomal protein uS12 methylthiotransferase RimO from Parabacteroides distasonis (strain ATCC 8503 / DSM 20701 / CIP 104284 / JCM 5825 / NCTC 11152).